A 156-amino-acid polypeptide reads, in one-letter code: Ecotin (156 aa).

The signal sequence occupies residues 1-19 (MKALLIAAGVAALSSTAMA). Residues Cys65 and Cys102 are joined by a disulfide bond.

The protein belongs to the protease inhibitor I11 (ecotin) family. Homodimer.

The protein localises to the periplasm. In terms of biological role, general inhibitor of family S1 serine proteases. The protein is Ecotin of Pseudomonas aeruginosa (strain LESB58).